The primary structure comprises 546 residues: CTP synthase (546 aa).

The segment at 1–267 (MTKFIFVTGG…AEQVLDILQL (267 aa)) is amidoligase domain. Ser-13 serves as a coordination point for CTP. Ser-13 lines the UTP pocket. 14-19 (SIGKGI) provides a ligand contact to ATP. Tyr-54 serves as a coordination point for L-glutamine. An ATP-binding site is contributed by Asp-71. Positions 71 and 141 each coordinate Mg(2+). Residues 148–150 (DIE), 188–193 (KTKPTQ), and Lys-224 contribute to the CTP site. UTP-binding positions include 188 to 193 (KTKPTQ) and Lys-224. One can recognise a Glutamine amidotransferase type-1 domain in the interval 292–534 (EVAIVGKYVR…IKAALGSDLT (243 aa)). An L-glutamine-binding site is contributed by Gly-354. Cys-381 acts as the Nucleophile; for glutamine hydrolysis in catalysis. L-glutamine-binding positions include 382–385 (LGMQ), Glu-405, and Arg-462. Catalysis depends on residues His-507 and Glu-509.

The protein belongs to the CTP synthase family. In terms of assembly, homotetramer.

The enzyme catalyses UTP + L-glutamine + ATP + H2O = CTP + L-glutamate + ADP + phosphate + 2 H(+). The catalysed reaction is L-glutamine + H2O = L-glutamate + NH4(+). It catalyses the reaction UTP + NH4(+) + ATP = CTP + ADP + phosphate + 2 H(+). It participates in pyrimidine metabolism; CTP biosynthesis via de novo pathway; CTP from UDP: step 2/2. Its activity is regulated as follows. Allosterically activated by GTP, when glutamine is the substrate; GTP has no effect on the reaction when ammonia is the substrate. The allosteric effector GTP functions by stabilizing the protein conformation that binds the tetrahedral intermediate(s) formed during glutamine hydrolysis. Inhibited by the product CTP, via allosteric rather than competitive inhibition. Catalyzes the ATP-dependent amination of UTP to CTP with either L-glutamine or ammonia as the source of nitrogen. Regulates intracellular CTP levels through interactions with the four ribonucleotide triphosphates. This Synechococcus sp. (strain ATCC 27144 / PCC 6301 / SAUG 1402/1) (Anacystis nidulans) protein is CTP synthase.